Here is a 75-residue protein sequence, read N- to C-terminus: Probable protein BRICK1-B (75 aa).

The stretch at 41–72 (MSCRSRLATLNEKLTTLERRIEYIEARVTKGE) forms a coiled coil.

This sequence belongs to the BRK1 family.

The protein localises to the cytoplasm. It is found in the cytoskeleton. Functionally, involved in regulation of actin and microtubule organization. Part of a WAVE complex that activates the Arp2/3 complex. The chain is Probable protein BRICK1-B (brk1-b) from Xenopus laevis (African clawed frog).